A 332-amino-acid chain; its full sequence is Holliday junction branch migration complex subunit RuvB (332 aa).

The large ATPase domain (RuvB-L) stretch occupies residues 1 to 181; sequence MSRILDNELM…FGITGHMEYY (181 aa). ATP is bound by residues L20, R21, G62, K65, T66, T67, 128-130, R171, Y181, and R218; that span reads EDF. Residue T66 participates in Mg(2+) binding. Residues 182 to 252 are small ATPAse domain (RuvB-S); sequence EAGDLTEIVE…ITDQALSMLD (71 aa). Positions 255–332 are head domain (RuvB-H); it reads QEGLDYVDQK…EHLGYEYMKE (78 aa). R291, R310, R312, and R315 together coordinate DNA.

Belongs to the RuvB family. Homohexamer. Forms an RuvA(8)-RuvB(12)-Holliday junction (HJ) complex. HJ DNA is sandwiched between 2 RuvA tetramers; dsDNA enters through RuvA and exits via RuvB. An RuvB hexamer assembles on each DNA strand where it exits the tetramer. Each RuvB hexamer is contacted by two RuvA subunits (via domain III) on 2 adjacent RuvB subunits; this complex drives branch migration. In the full resolvosome a probable DNA-RuvA(4)-RuvB(12)-RuvC(2) complex forms which resolves the HJ.

Its subcellular location is the cytoplasm. The catalysed reaction is ATP + H2O = ADP + phosphate + H(+). Its function is as follows. The RuvA-RuvB-RuvC complex processes Holliday junction (HJ) DNA during genetic recombination and DNA repair, while the RuvA-RuvB complex plays an important role in the rescue of blocked DNA replication forks via replication fork reversal (RFR). RuvA specifically binds to HJ cruciform DNA, conferring on it an open structure. The RuvB hexamer acts as an ATP-dependent pump, pulling dsDNA into and through the RuvAB complex. RuvB forms 2 homohexamers on either side of HJ DNA bound by 1 or 2 RuvA tetramers; 4 subunits per hexamer contact DNA at a time. Coordinated motions by a converter formed by DNA-disengaged RuvB subunits stimulates ATP hydrolysis and nucleotide exchange. Immobilization of the converter enables RuvB to convert the ATP-contained energy into a lever motion, pulling 2 nucleotides of DNA out of the RuvA tetramer per ATP hydrolyzed, thus driving DNA branch migration. The RuvB motors rotate together with the DNA substrate, which together with the progressing nucleotide cycle form the mechanistic basis for DNA recombination by continuous HJ branch migration. Branch migration allows RuvC to scan DNA until it finds its consensus sequence, where it cleaves and resolves cruciform DNA. The chain is Holliday junction branch migration complex subunit RuvB from Streptococcus sanguinis (strain SK36).